The primary structure comprises 185 residues: Potassium-transporting ATPase KdpC subunit (185 aa).

A helical transmembrane segment spans residues 14–34; it reads ALSLLTGVAYPLALTGIAAVI.

It belongs to the KdpC family. As to quaternary structure, the system is composed of three essential subunits: KdpA, KdpB and KdpC.

It is found in the cell inner membrane. Its function is as follows. Part of the high-affinity ATP-driven potassium transport (or Kdp) system, which catalyzes the hydrolysis of ATP coupled with the electrogenic transport of potassium into the cytoplasm. This subunit acts as a catalytic chaperone that increases the ATP-binding affinity of the ATP-hydrolyzing subunit KdpB by the formation of a transient KdpB/KdpC/ATP ternary complex. The sequence is that of Potassium-transporting ATPase KdpC subunit from Cereibacter sphaeroides (strain ATCC 17023 / DSM 158 / JCM 6121 / CCUG 31486 / LMG 2827 / NBRC 12203 / NCIMB 8253 / ATH 2.4.1.) (Rhodobacter sphaeroides).